Reading from the N-terminus, the 344-residue chain is MIDFVKSRDTVIQKSFFEEFNSQNREMGSFAYSGNSESVWTGENITSIWKTILINETGSYCVAARPMTMDGAEFNLDLMGYSVSEDQINNDEIGIWNYISVAEMGGVLLFLSYWIWTCLHFSKIIFPAQKVICLYIFLFALNQTLQECIEEYVFSSECIKYRQFYSVYEIIDFLRTNFYRLFVIYCALGFGITRTVPKYLMIKGISIVIALCSVYWISLYKDVYVVSEIFDMIQYEVSPAIWVYSICHLLKQCTSVTTYENASKARFFRRMLNAFIFIFCASPMLHYLSNIIFGNFDYRLSVIIGDLFTFMEKIAFPCYIMFPTHNEALAYNRNVAEEAQEKMI.

Over 1 to 98 (MIDFVKSRDT…NNDEIGIWNY (98 aa)) the chain is Cytoplasmic. A helical transmembrane segment spans residues 99–119 (ISVAEMGGVLLFLSYWIWTCL). Residue histidine 120 is a topological domain, lumenal. Residues 121–141 (FSKIIFPAQKVICLYIFLFAL) form a helical membrane-spanning segment. The Cytoplasmic portion of the chain corresponds to 142-198 (NQTLQECIEEYVFSSECIKYRQFYSVYEIIDFLRTNFYRLFVIYCALGFGITRTVPK). A helical transmembrane segment spans residues 199-219 (YLMIKGISIVIALCSVYWISL). Residues 220-222 (YKD) are Lumenal-facing. A helical transmembrane segment spans residues 223–243 (VYVVSEIFDMIQYEVSPAIWV). Residues 244–273 (YSICHLLKQCTSVTTYENASKARFFRRMLN) are Cytoplasmic-facing. A helical transmembrane segment spans residues 274 to 294 (AFIFIFCASPMLHYLSNIIFG). Topologically, residues 295–344 (NFDYRLSVIIGDLFTFMEKIAFPCYIMFPTHNEALAYNRNVAEEAQEKMI) are lumenal.

The protein belongs to the UPF0742 family.

Its subcellular location is the endoplasmic reticulum. It localises to the membrane. This is an uncharacterized protein from Schizosaccharomyces pombe (strain 972 / ATCC 24843) (Fission yeast).